A 121-amino-acid polypeptide reads, in one-letter code: MQAKLIEILESSQIRLYPQFQPGDNVRVYFKIQEGNKTRIQIFEGLVIKFKKNGLSSNFVVRKISHNVGVERTFLLHSPLVEKVEVIRSNKVRRAKLYYMKKRSGKSARLKEIKRKELKNL.

It belongs to the bacterial ribosomal protein bL19 family.

This protein is located at the 30S-50S ribosomal subunit interface and may play a role in the structure and function of the aminoacyl-tRNA binding site. The polypeptide is Large ribosomal subunit protein bL19 (Mesomycoplasma hyopneumoniae (strain 232) (Mycoplasma hyopneumoniae)).